Consider the following 230-residue polypeptide: Orotidine 5'-phosphate decarboxylase (230 aa).

Substrate is bound by residues Asp-10, Lys-32, 59-68, Thr-119, Arg-180, Gln-189, Gly-209, and Arg-210; that span reads DLKYHDIPNT. Residue Lys-61 is the Proton donor of the active site.

It belongs to the OMP decarboxylase family. Type 1 subfamily. Homodimer.

It catalyses the reaction orotidine 5'-phosphate + H(+) = UMP + CO2. It participates in pyrimidine metabolism; UMP biosynthesis via de novo pathway; UMP from orotate: step 2/2. Its function is as follows. Catalyzes the decarboxylation of orotidine 5'-monophosphate (OMP) to uridine 5'-monophosphate (UMP). The protein is Orotidine 5'-phosphate decarboxylase of Haemophilus influenzae (strain PittEE).